The chain runs to 63 residues: MIIDSITKLNFKNKSSSSSVITVKTSTSPQIIFGDNKFTGGVNKQKGFDSVSPTLKGKGILFV.

This is an uncharacterized protein from Dictyostelium discoideum (Social amoeba).